The sequence spans 102 residues: MENLQKMISEKSVVIFSKNSCCMSHTIKTLFLDFGVNPTIYELDEINIGREIEQALAQLGCSPTVPVVFIGGQLVGGANQVMSLHLNRSLVPMLKRAGALWL.

In terms of domain architecture, Glutaredoxin spans 1-101 (MENLQKMISE…PMLKRAGALW (101 aa)). Cysteine 21 serves as a coordination point for [2Fe-2S] cluster. Residues 99-102 (ALWL) carry the Responsive for interaction with TGA factors motif.

This sequence belongs to the glutaredoxin family. CC-type subfamily.

The protein resides in the cytoplasm. It is found in the nucleus. Functionally, may only reduce GSH-thiol disulfides, but not protein disulfides. The chain is Monothiol glutaredoxin-S5 (GRXS5) from Arabidopsis thaliana (Mouse-ear cress).